The chain runs to 101 residues: uncharacterized protein (101 aa).

Helical transmembrane passes span Leu-35–Ile-55 and Phe-66–Phe-86.

The protein localises to the membrane. This is an uncharacterized protein from Saccharomyces cerevisiae (strain ATCC 204508 / S288c) (Baker's yeast).